A 364-amino-acid chain; its full sequence is Succinyl-diaminopimelate desuccinylase (364 aa).

Residue histidine 64 participates in Zn(2+) binding. Residue aspartate 66 is part of the active site. Aspartate 95 is a binding site for Zn(2+). Glutamate 125 (proton acceptor) is an active-site residue. The Zn(2+) site is built by glutamate 126, glutamate 154, and histidine 339.

The protein belongs to the peptidase M20A family. DapE subfamily. As to quaternary structure, homodimer. The cofactor is Zn(2+). It depends on Co(2+) as a cofactor.

The catalysed reaction is N-succinyl-(2S,6S)-2,6-diaminopimelate + H2O = (2S,6S)-2,6-diaminopimelate + succinate. It participates in amino-acid biosynthesis; L-lysine biosynthesis via DAP pathway; LL-2,6-diaminopimelate from (S)-tetrahydrodipicolinate (succinylase route): step 3/3. In terms of biological role, catalyzes the hydrolysis of N-succinyl-L,L-diaminopimelic acid (SDAP), forming succinate and LL-2,6-diaminopimelate (DAP), an intermediate involved in the bacterial biosynthesis of lysine and meso-diaminopimelic acid, an essential component of bacterial cell walls. This Nitratiruptor sp. (strain SB155-2) protein is Succinyl-diaminopimelate desuccinylase.